Reading from the N-terminus, the 407-residue chain is 1-deoxy-D-xylulose 5-phosphate reductoisomerase (407 aa).

NADPH is bound by residues Thr27, Gly28, Ser29, Ile30, Ala53, Arg54, Asn55, and Asn140. A 1-deoxy-D-xylulose 5-phosphate-binding site is contributed by Lys141. Glu142 is an NADPH binding site. Asp166 serves as a coordination point for Mn(2+). Ser167, Glu168, Ser192, and His215 together coordinate 1-deoxy-D-xylulose 5-phosphate. A Mn(2+)-binding site is contributed by Glu168. Gly221 contributes to the NADPH binding site. The 1-deoxy-D-xylulose 5-phosphate site is built by Ser228, Asn233, Lys234, and Glu237. Glu237 contributes to the Mn(2+) binding site.

Belongs to the DXR family. The cofactor is Mg(2+). Mn(2+) serves as cofactor.

The catalysed reaction is 2-C-methyl-D-erythritol 4-phosphate + NADP(+) = 1-deoxy-D-xylulose 5-phosphate + NADPH + H(+). Its pathway is isoprenoid biosynthesis; isopentenyl diphosphate biosynthesis via DXP pathway; isopentenyl diphosphate from 1-deoxy-D-xylulose 5-phosphate: step 1/6. Its function is as follows. Catalyzes the NADPH-dependent rearrangement and reduction of 1-deoxy-D-xylulose-5-phosphate (DXP) to 2-C-methyl-D-erythritol 4-phosphate (MEP). This chain is 1-deoxy-D-xylulose 5-phosphate reductoisomerase, found in Oleidesulfovibrio alaskensis (strain ATCC BAA-1058 / DSM 17464 / G20) (Desulfovibrio alaskensis).